Reading from the N-terminus, the 341-residue chain is tRNA N6-adenosine threonylcarbamoyltransferase (341 aa).

H111 and H115 together coordinate Fe cation. Substrate contacts are provided by residues 134-138, D167, G180, and N276; that span reads LVSGG. D304 is a binding site for Fe cation.

Belongs to the KAE1 / TsaD family. It depends on Fe(2+) as a cofactor.

It is found in the cytoplasm. It carries out the reaction L-threonylcarbamoyladenylate + adenosine(37) in tRNA = N(6)-L-threonylcarbamoyladenosine(37) in tRNA + AMP + H(+). In terms of biological role, required for the formation of a threonylcarbamoyl group on adenosine at position 37 (t(6)A37) in tRNAs that read codons beginning with adenine. Is involved in the transfer of the threonylcarbamoyl moiety of threonylcarbamoyl-AMP (TC-AMP) to the N6 group of A37, together with TsaE and TsaB. TsaD likely plays a direct catalytic role in this reaction. In Pseudomonas putida (strain ATCC 700007 / DSM 6899 / JCM 31910 / BCRC 17059 / LMG 24140 / F1), this protein is tRNA N6-adenosine threonylcarbamoyltransferase.